We begin with the raw amino-acid sequence, 131 residues long: Small ribosomal subunit protein uS8 (131 aa).

Belongs to the universal ribosomal protein uS8 family. Part of the 30S ribosomal subunit. Contacts proteins S5 and S12.

In terms of biological role, one of the primary rRNA binding proteins, it binds directly to 16S rRNA central domain where it helps coordinate assembly of the platform of the 30S subunit. The polypeptide is Small ribosomal subunit protein uS8 (Verminephrobacter eiseniae (strain EF01-2)).